The sequence spans 333 residues: L-lactate dehydrogenase B chain (333 aa).

NAD(+) is bound by residues 29–57 (GQVGMACAISILGKRLGDELALVDVWEDK) and R99. Substrate contacts are provided by R106, N138, and R169. Residue N138 coordinates NAD(+). H193 acts as the Proton acceptor in catalysis. T248 contacts substrate.

Belongs to the LDH/MDH superfamily. LDH family. In terms of assembly, homotetramer.

It localises to the cytoplasm. The catalysed reaction is (S)-lactate + NAD(+) = pyruvate + NADH + H(+). Its pathway is fermentation; pyruvate fermentation to lactate; (S)-lactate from pyruvate: step 1/1. In terms of biological role, interconverts simultaneously and stereospecifically pyruvate and lactate with concomitant interconversion of NADH and NAD(+). In Alligator mississippiensis (American alligator), this protein is L-lactate dehydrogenase B chain (LDHB).